Reading from the N-terminus, the 112-residue chain is Chaperone NapD (112 aa).

It belongs to the NapD family. As to quaternary structure, interacts with the cytoplasmic NapA precursor.

Its subcellular location is the cytoplasm. Functionally, chaperone for NapA, the catalytic subunit of the periplasmic nitrate reductase. It binds directly and specifically to the twin-arginine signal peptide of NapA, preventing premature interaction with the Tat translocase and premature export. This is Chaperone NapD from Paracoccus pantotrophus (Thiosphaera pantotropha).